Consider the following 588-residue polypeptide: Actin-histidine N-methyltransferase (588 aa).

A disordered region spans residues 1–25; sequence MGKKSRVKTQKSGTGATASVSPKET. Residues 10–25 are compositionally biased toward polar residues; it reads QKSGTGATASVSPKET. Residues arginine 75, 104-106, arginine 254, 275-279, and 325-327 each bind S-adenosyl-L-methionine; these read EGF, DMCNH, and SGF. Residues 94–314 enclose the SET domain; that stretch reads EGFEMVNFKE…AGEQIYIFYG (221 aa). A disordered region spans residues 546–588; it reads VNGENSIPNGTRSGKENFNQEGSERATEGTKESSSDSTAGARE. Polar residues predominate over residues 548–566; the sequence is GENSIPNGTRSGKENFNQE. The segment covering 567–579 has biased composition (basic and acidic residues); that stretch reads GSERATEGTKESS.

This sequence belongs to the class V-like SAM-binding methyltransferase superfamily. SETD3 actin-histidine methyltransferase family. In terms of assembly, interacts with MYOD1. Post-translationally, phosphorylated by GSK3B, which is required for recognition by the SCF(FBXW7) complex and subsequent degradation. Ubiquitinated by the SCF(FBXW7) complex following phosphorylation by GSK3B, leading to its degradation by the proteasome.

It localises to the cytoplasm. The protein localises to the nucleus. It catalyses the reaction L-histidyl-[protein] + S-adenosyl-L-methionine = N(tele)-methyl-L-histidyl-[protein] + S-adenosyl-L-homocysteine + H(+). Functionally, protein-histidine N-methyltransferase that specifically mediates 3-methylhistidine (tele-methylhistidine) methylation of actin at 'His-73'. Histidine methylation of actin is required for smooth muscle contraction of the laboring uterus during delivery. Does not have protein-lysine N-methyltransferase activity and probably only catalyzes histidine methylation of actin. In Canis lupus familiaris (Dog), this protein is Actin-histidine N-methyltransferase.